A 268-amino-acid chain; its full sequence is Orotidine 5'-phosphate decarboxylase (268 aa).

Substrate contacts are provided by residues D38, 60–62 (KTH), 92–101 (DRKFADIGNT), Y218, and R236. K94 (proton donor) is an active-site residue.

The protein belongs to the OMP decarboxylase family.

It carries out the reaction orotidine 5'-phosphate + H(+) = UMP + CO2. The protein operates within pyrimidine metabolism; UMP biosynthesis via de novo pathway; UMP from orotate: step 2/2. This is Orotidine 5'-phosphate decarboxylase (URA3) from Candida tropicalis (Yeast).